Reading from the N-terminus, the 179-residue chain is ATP synthase subunit delta (179 aa).

The protein belongs to the ATPase delta chain family. F-type ATPases have 2 components, F(1) - the catalytic core - and F(0) - the membrane proton channel. F(1) has five subunits: alpha(3), beta(3), gamma(1), delta(1), epsilon(1). F(0) has three main subunits: a(1), b(2) and c(10-14). The alpha and beta chains form an alternating ring which encloses part of the gamma chain. F(1) is attached to F(0) by a central stalk formed by the gamma and epsilon chains, while a peripheral stalk is formed by the delta and b chains.

The protein localises to the cell inner membrane. In terms of biological role, f(1)F(0) ATP synthase produces ATP from ADP in the presence of a proton or sodium gradient. F-type ATPases consist of two structural domains, F(1) containing the extramembraneous catalytic core and F(0) containing the membrane proton channel, linked together by a central stalk and a peripheral stalk. During catalysis, ATP synthesis in the catalytic domain of F(1) is coupled via a rotary mechanism of the central stalk subunits to proton translocation. This protein is part of the stalk that links CF(0) to CF(1). It either transmits conformational changes from CF(0) to CF(1) or is implicated in proton conduction. The protein is ATP synthase subunit delta of Bordetella petrii (strain ATCC BAA-461 / DSM 12804 / CCUG 43448).